The primary structure comprises 270 residues: Gap junction beta-3 protein (270 aa).

Topologically, residues 1–20 are cytoplasmic; that stretch reads MDWKKLQDLLSGVNQYSTAF. The chain crosses the membrane as a helical span at residues 21–40; it reads GRIWLSVVFVFRVLVYVVAA. The Extracellular segment spans residues 41–75; sequence ERVWGDEQKDFDCNTRQPGCTNVCYDNFFPISNIR. A helical transmembrane segment spans residues 76 to 98; it reads LWALQLIFVTCPSMLVILHVAYR. Residues 99-126 are Cytoplasmic-facing; it reads EERERKHRQKHGEHCAKLYSHPGKKHGG. A helical membrane pass occupies residues 127-149; the sequence is LWWTYLFSLIFKLIIELVFLYVL. Residues 150–188 lie on the Extracellular side of the membrane; the sequence is HTLWHGFTMPRLVQCASVVPCPNTVDCYIARPTEKKVFT. A helical membrane pass occupies residues 189-211; that stretch reads YFMVGASAVCIILTICEICYLIF. At 212–270 the chain is on the cytoplasmic side; it reads HRIMRGLSKDKSTKSISSPKSSSRASTCRCHHKLLESGDLEAVPADDKLQASAPSLTPI.

The protein belongs to the connexin family. Beta-type (group I) subfamily. A connexon is composed of a hexamer of connexins. Interacts with CNST.

The protein resides in the cell membrane. Its subcellular location is the cell junction. The protein localises to the gap junction. Functionally, one gap junction consists of a cluster of closely packed pairs of transmembrane channels, the connexons, through which materials of low MW diffuse from one cell to a neighboring cell. The sequence is that of Gap junction beta-3 protein (Gjb3) from Rattus norvegicus (Rat).